The following is a 716-amino-acid chain: Forkhead box protein P2 (716 aa).

The segment covering 1 to 28 has biased composition (polar residues); sequence MMQESATETISNSSMNQNGMSTLSSQLD. 2 disordered regions span residues 1–45 and 286–340; these read MMQE…SEVS and KHGG…TGAS. Low complexity predominate over residues 293-306; the sequence is TTNNSSSTTSSTTS. The segment covering 316–325 has biased composition (polar residues); sequence SIVNGQSSVL. Over residues 327-338 the composition is skewed to basic and acidic residues; it reads ARRDSSSHEETG. A C2H2-type zinc finger spans residues 347 to 372; sequence GVCKWPGCESICEDFGQFLKHLNNEH. The interval 389 to 410 is leucine-zipper; that stretch reads VQQLEIQLSKERERLQAMMTHL. The tract at residues 423–427 is CTBP1-binding; the sequence is PLNLV. The span at 439–460 shows a compositional bias: low complexity; that stretch reads TSPQSLPQTPTTPTAPVTPITQ. Positions 439 to 466 are disordered; it reads TSPQSLPQTPTTPTAPVTPITQGPSVIT. A DNA-binding region (fork-head) is located at residues 505–595; that stretch reads RPPFTYATLI…SQKITGSPTL (91 aa). 2 disordered regions span residues 650-669 and 679-716; these read LDHI…QPHI and VIAE…EDLE. Acidic residues predominate over residues 700–716; the sequence is LEDDREIEEEPLSEDLE.

Forms homodimers and heterodimers with FOXP1 and FOXP4. Dimerization is required for DNA-binding. Interacts with CTBP1. Interacts with FOXP1. Interacts with TBR1. Interacts with ZMYM2.

The protein localises to the nucleus. Transcriptional repressor that may play a role in the specification and differentiation of lung epithelium. May also play a role in developing neural, gastrointestinal and cardiovascular tissues. Can act with CTBP1 to synergistically repress transcription but CTPBP1 is not essential. Plays a role in synapse formation by regulating SRPX2 levels. This chain is Forkhead box protein P2 (FOXP2), found in Pan paniscus (Pygmy chimpanzee).